Consider the following 333-residue polypeptide: Ephrin-B2 (333 aa).

A signal peptide spans 1–27; the sequence is MAVRRDSVWKYCWGVLMVLCRTAISKS. Residues 28 to 164 form the Ephrin RBD domain; sequence IVLEPIYWNS…TRAMKILMKV (137 aa). Residues 28-229 lie on the Extracellular side of the membrane; that stretch reads IVLEPIYWNS…ILGSEVALFA (202 aa). An N-linked (GlcNAc...) asparagine glycan is attached at Asn36. Disulfide bonds link Cys62-Cys101 and Cys89-Cys153. Asn139 is a glycosylation site (N-linked (GlcNAc...) asparagine). Residues 165-213 are disordered; the sequence is GQDASSAGSTRNKDPTRRPELEAGTNGRSSTTSPFVKPNPGSSTDGNSA. Over residues 175–185 the composition is skewed to basic and acidic residues; the sequence is RNKDPTRRPEL. Positions 190 to 213 are enriched in polar residues; sequence NGRSSTTSPFVKPNPGSSTDGNSA. A helical transmembrane segment spans residues 230 to 250; it reads GIASGCIIFIVIIITLVVLLL. The Cytoplasmic portion of the chain corresponds to 251 to 333; sequence KYRRRHRKHS…QSPANIYYKV (83 aa). Ser260 carries the post-translational modification Phosphoserine. Thr274 carries the phosphothreonine modification. Omega-N-methylarginine is present on Arg277. A PDZ-binding motif is present at residues 331–333; that stretch reads YKV.

It belongs to the ephrin family. In terms of assembly, interacts with PDZRN3. Binds to the receptor tyrosine kinases EPHA4, EPHB4 and EPHA3. As to quaternary structure, (Microbial infection) Interacts with Hendra virus and Nipah virus G protein. Post-translationally, inducible phosphorylation of tyrosine residues in the cytoplasmic domain. Lung and kidney.

The protein localises to the cell membrane. It localises to the cell junction. The protein resides in the adherens junction. Cell surface transmembrane ligand for Eph receptors, a family of receptor tyrosine kinases which are crucial for migration, repulsion and adhesion during neuronal, vascular and epithelial development. Binds promiscuously Eph receptors residing on adjacent cells, leading to contact-dependent bidirectional signaling into neighboring cells. The signaling pathway downstream of the receptor is referred to as forward signaling while the signaling pathway downstream of the ephrin ligand is referred to as reverse signaling. Binds to receptor tyrosine kinase including EPHA4, EPHA3 and EPHB4. Together with EPHB4 plays a central role in heart morphogenesis and angiogenesis through regulation of cell adhesion and cell migration. EPHB4-mediated forward signaling controls cellular repulsion and segregation from EFNB2-expressing cells. May play a role in constraining the orientation of longitudinally projecting axons. Its function is as follows. (Microbial infection) Acts as a receptor for Hendra virus and Nipah virus. This Homo sapiens (Human) protein is Ephrin-B2 (EFNB2).